Consider the following 313-residue polypeptide: tRNA dimethylallyltransferase (313 aa).

10–17 contributes to the ATP binding site; sequence GPTASGKT. 12 to 17 serves as a coordination point for substrate; that stretch reads TASGKT. Interaction with substrate tRNA stretches follow at residues 35 to 38, 159 to 163, and 240 to 245; these read DSAM, QRIQR, and RCVGYR.

Belongs to the IPP transferase family. In terms of assembly, monomer. Mg(2+) serves as cofactor.

It carries out the reaction adenosine(37) in tRNA + dimethylallyl diphosphate = N(6)-dimethylallyladenosine(37) in tRNA + diphosphate. Its function is as follows. Catalyzes the transfer of a dimethylallyl group onto the adenine at position 37 in tRNAs that read codons beginning with uridine, leading to the formation of N6-(dimethylallyl)adenosine (i(6)A). The sequence is that of tRNA dimethylallyltransferase from Legionella pneumophila (strain Paris).